A 422-amino-acid chain; its full sequence is Serine hydroxymethyltransferase (422 aa).

Residue 121–123 (GHI) participates in (6S)-5,6,7,8-tetrahydrofolate binding. N6-(pyridoxal phosphate)lysine is present on lysine 227. Position 245 (glutamate 245) interacts with (6S)-5,6,7,8-tetrahydrofolate.

The protein belongs to the SHMT family. In terms of assembly, homodimer. Pyridoxal 5'-phosphate serves as cofactor.

The protein resides in the cytoplasm. It carries out the reaction 5,10-methylenetetrahydromethanopterin + glycine + H2O = 5,6,7,8-tetrahydromethanopterin + L-serine. It participates in amino-acid biosynthesis; glycine biosynthesis; glycine from L-serine: step 1/1. Its function is as follows. Catalyzes the reversible interconversion of serine and glycine with tetrahydromethanopterin (H4MPT) serving as the one-carbon carrier. Also exhibits a pteridine-independent aldolase activity toward beta-hydroxyamino acids, producing glycine and aldehydes, via a retro-aldol mechanism. This chain is Serine hydroxymethyltransferase, found in Methanobrevibacter smithii (strain ATCC 35061 / DSM 861 / OCM 144 / PS).